The primary structure comprises 235 residues: ATP-dependent Clp protease proteolytic subunit (235 aa).

Residue serine 123 is the Nucleophile of the active site. Histidine 148 is an active-site residue.

The protein belongs to the peptidase S14 family. Fourteen ClpP subunits assemble into 2 heptameric rings which stack back to back to give a disk-like structure with a central cavity, resembling the structure of eukaryotic proteasomes.

It localises to the cytoplasm. The enzyme catalyses Hydrolysis of proteins to small peptides in the presence of ATP and magnesium. alpha-casein is the usual test substrate. In the absence of ATP, only oligopeptides shorter than five residues are hydrolyzed (such as succinyl-Leu-Tyr-|-NHMec, and Leu-Tyr-Leu-|-Tyr-Trp, in which cleavage of the -Tyr-|-Leu- and -Tyr-|-Trp bonds also occurs).. Cleaves peptides in various proteins in a process that requires ATP hydrolysis. Has a chymotrypsin-like activity. Plays a major role in the degradation of misfolded proteins. The sequence is that of ATP-dependent Clp protease proteolytic subunit from Novosphingobium aromaticivorans (strain ATCC 700278 / DSM 12444 / CCUG 56034 / CIP 105152 / NBRC 16084 / F199).